A 676-amino-acid chain; its full sequence is Capsid vertex component 1 (676 aa).

Residues 253–264 (HPVRPSSSRVAS) show a composition bias toward low complexity. A disordered region spans residues 253 to 308 (HPVRPSSSRVASGLLQSAKGHGAQTSNTDPINNGSFDGVLEPPGQGRFTGKKNNSS). A compositionally biased stretch (polar residues) spans 275–287 (AQTSNTDPINNGS).

Belongs to the herpesviridae CVC1 protein family. Interacts (via C-terminus) with capsid vertex component 2/CVC2.

The protein localises to the virion. Its subcellular location is the host nucleus. Functionally, capsid vertex-specific component that plays a role during viral DNA encapsidation, assuring correct genome cleavage and presumably stabilizing capsids that contain full-length viral genomes. The sequence is that of Capsid vertex component 1 from Varicella-zoster virus (strain Dumas) (HHV-3).